A 389-amino-acid chain; its full sequence is Probable nitrate transporter NarT (389 aa).

The next 12 helical transmembrane spans lie at 14-34 (TLSLVVGFMAWSIIAPLMPFI), 45-65 (ISIILAIPVILGSVLRVPFGY), 69-89 (IVGAKWVFFTSFIVLLFPIFF), 97-117 (GMLMASGFFLGVGGAIFSVGV), 139-159 (GNIGTAVSSFLAPPIAGIIGW), 161-181 (TTVRSYLIIIALFALIMFIFG), 211-231 (WYFITFGAFVAFGIFLPNYLV), 246-266 (GVFIALATFLRPIGGILGDKF), 268-288 (AVKVLMIDFVVMIIGAIILGI), 294-314 (LFTVGCLTISICAGIGNGLIF), 331-351 (IVSMMGGLGGFFPPLVITYVA), and 353-373 (LTGSSHLAFIFLAVFGCIALF).

This sequence belongs to the major facilitator superfamily. Nitrate/nitrite porter (TC 2.A.1.8) family.

The protein localises to the cell membrane. Its function is as follows. Probably required for nitrate uptake under anoxic conditions. Also possibly involved in excretion of nitrite produced by the dissimilatory reduction of nitrate. The polypeptide is Probable nitrate transporter NarT (narT) (Staphylococcus aureus (strain USA300)).